Reading from the N-terminus, the 186-residue chain is UPF0301 protein Tgr7_2910 (186 aa).

Belongs to the UPF0301 (AlgH) family.

The protein is UPF0301 protein Tgr7_2910 of Thioalkalivibrio sulfidiphilus (strain HL-EbGR7).